The chain runs to 409 residues: Elongation factor Tu (409 aa).

The 205-residue stretch at 10–214 (KPHVNIGTIG…EVDAYIPEPE (205 aa)) folds into the tr-type G domain. The interval 19-26 (GHVDHGKT) is G1. 19–26 (GHVDHGKT) contacts GTP. Residue T26 coordinates Mg(2+). A G2 region spans residues 60–64 (GITIN). Residues 81-84 (DCPG) are G3. Residues 81–85 (DCPGH) and 136–139 (NKQD) contribute to the GTP site. Residues 136 to 139 (NKQD) form a G4 region. Residues 174-176 (SAL) form a G5 region.

The protein belongs to the TRAFAC class translation factor GTPase superfamily. Classic translation factor GTPase family. EF-Tu/EF-1A subfamily. Monomer.

The protein localises to the cytoplasm. It catalyses the reaction GTP + H2O = GDP + phosphate + H(+). Its function is as follows. GTP hydrolase that promotes the GTP-dependent binding of aminoacyl-tRNA to the A-site of ribosomes during protein biosynthesis. The sequence is that of Elongation factor Tu from Rippkaea orientalis (strain PCC 8801 / RF-1) (Cyanothece sp. (strain PCC 8801)).